Consider the following 251-residue polypeptide: Imidazole glycerol phosphate synthase subunit HisF (251 aa).

Residues aspartate 12 and aspartate 131 contribute to the active site.

Belongs to the HisA/HisF family. Heterodimer of HisH and HisF.

The protein resides in the cytoplasm. The enzyme catalyses 5-[(5-phospho-1-deoxy-D-ribulos-1-ylimino)methylamino]-1-(5-phospho-beta-D-ribosyl)imidazole-4-carboxamide + L-glutamine = D-erythro-1-(imidazol-4-yl)glycerol 3-phosphate + 5-amino-1-(5-phospho-beta-D-ribosyl)imidazole-4-carboxamide + L-glutamate + H(+). The protein operates within amino-acid biosynthesis; L-histidine biosynthesis; L-histidine from 5-phospho-alpha-D-ribose 1-diphosphate: step 5/9. Its function is as follows. IGPS catalyzes the conversion of PRFAR and glutamine to IGP, AICAR and glutamate. The HisF subunit catalyzes the cyclization activity that produces IGP and AICAR from PRFAR using the ammonia provided by the HisH subunit. The polypeptide is Imidazole glycerol phosphate synthase subunit HisF (Helicobacter hepaticus (strain ATCC 51449 / 3B1)).